Reading from the N-terminus, the 2177-residue chain is Protein sidekick-2 (2177 aa).

The signal sequence occupies residues 1 to 26 (MKGLGVPAAALLWGGLSALLPPSLPA). Over 27–1937 (DDVSPYFKTE…ANPFYEEWWF (1911 aa)) the chain is Extracellular. Ig-like C2-type domains are found at residues 31–113 (PYFK…TEVQ), 118–205 (GSFE…QPIT), 220–299 (PTII…SSVP), 313–401 (PQFV…TYLA), 407–496 (PNIT…ADLV), and 501–590 (TRIT…AHLR). Cysteines 53 and 96 form a disulfide. N-linked (GlcNAc...) asparagine glycosylation is found at N198 and N228. Disulfide bonds link C242–C289 and C335–C385. N-linked (GlcNAc...) asparagine glycosylation occurs at N408. Disulfide bonds link C428–C480 and C522–C574. N-linked (GlcNAc...) asparagine glycans are attached at residues N582, N614, N709, N748, N809, N941, and N953. Fibronectin type-III domains lie at 597 to 693 (APES…LPEE), 698 to 794 (PPQN…TLQG), 799 to 898 (PPGN…THED), 902 to 996 (PVGH…VPPE), 1000 to 1099 (APTN…TLQA), 1104 to 1202 (APAN…TRES), 1207 to 1304 (GPSN…TLDD), 1305 to 1402 (VPGP…TEKR), 1407 to 1504 (PPSK…TLQA), 1509 to 1626 (APTI…VGEA), 1631 to 1727 (APQN…TQQA), 1731 to 1826 (APGS…TGPG), and 1829 to 1928 (APGP…AQKA). N1107, N1210, N1261, N1346, N1462, N1580, N1593, N1675, N1694, N1746, and N1820 each carry an N-linked (GlcNAc...) asparagine glycan. Residues 1938–1958 (LVVIALVGLIFILLLVFVLII) traverse the membrane as a helical segment. At 1959–2177 (RGQSKKYAKK…APIGGFSSFV (219 aa)) the chain is on the cytoplasmic side. Disordered regions lie at residues 2044 to 2071 (AESS…VDPA) and 2103 to 2177 (QAYS…SSFV). Composition is skewed to polar residues over residues 2045–2063 (ESSS…QGSD) and 2119–2130 (PLSNSTSTQQGS). Pro residues predominate over residues 2142-2151 (PQTPGNPPSQ). A PDZ-binding motif is present at residues 2171–2177 (GGFSSFV).

It belongs to the sidekick family. In terms of assembly, homodimer; mediates homophilic interactions to promote cell adhesion. In terms of tissue distribution, expressed by non-overlapping subsets of retinal neurons. SDK1, SDK2, DSCAM and DSCAML1 are expressed in non-overlapping subsets of interneurons and retinal ganglion cells (RGCs) that form synapses in distinct inner plexiform layer (IPL) sublaminae.

The protein resides in the cell membrane. Its subcellular location is the synapse. In terms of biological role, adhesion molecule that promotes lamina-specific synaptic connections in the retina. Expressed in specific subsets of interneurons and retinal ganglion cells (RGCs) and promotes synaptic connectivity via homophilic interactions. The protein is Protein sidekick-2 of Gallus gallus (Chicken).